Reading from the N-terminus, the 749-residue chain is Chaperone protein DnaK 1 (749 aa).

The residue at position 198 (threonine 198) is a Phosphothreonine; by autocatalysis. Composition is skewed to basic and acidic residues over residues 643–653 (RWDADPWDRSR), 661–694 (YDDRRSPVSDPYRGERWVEEQTSMSRREPVRDRN), and 711–724 (PTWEEDQPPRRDRS). The disordered stretch occupies residues 643–749 (RWDADPWDRS…GWDDDDDEWF (107 aa)). The segment covering 740 to 749 (GWDDDDDEWF) has biased composition (acidic residues).

It belongs to the heat shock protein 70 family.

Functionally, acts as a chaperone. This Synechococcus sp. (strain ATCC 27144 / PCC 6301 / SAUG 1402/1) (Anacystis nidulans) protein is Chaperone protein DnaK 1.